The sequence spans 366 residues: MKFNDYVENLQNYEAGKPVELVVREYGVKEDDVIKLASNENPLGTGKKAVKAIYKMAKHANLYPDDSMFELKGALADKYGVSEKNVIIGAGSDQIIEFLIHAKCNENNGILTAGTTFSMYGIYAKHAKAKHFSTASKFHDLKEIKELYESHKDEISVIFLCVPNNPLGECLDAKDVIKFIKSIDDDTLVVIDAAYNEFASFKDKHKHIEPAEIVKLKNAIYLGTFSKVYGLGGLRVGYGVADEKIISALYKLRPPFNVANLSLAAAVAALQDKKFIEKTIKNNFKEMKKYEKFANATGIKFIKSYTNFITFILDESKKSSEISQKLLEKGLIVRDLKGYGLNAIRITVGLPKQNKRIFDELRKLLG.

Lys227 carries the post-translational modification N6-(pyridoxal phosphate)lysine.

It belongs to the class-II pyridoxal-phosphate-dependent aminotransferase family. Histidinol-phosphate aminotransferase subfamily. In terms of assembly, homodimer. It depends on pyridoxal 5'-phosphate as a cofactor.

It catalyses the reaction L-histidinol phosphate + 2-oxoglutarate = 3-(imidazol-4-yl)-2-oxopropyl phosphate + L-glutamate. The protein operates within amino-acid biosynthesis; L-histidine biosynthesis; L-histidine from 5-phospho-alpha-D-ribose 1-diphosphate: step 7/9. In Campylobacter hominis (strain ATCC BAA-381 / DSM 21671 / CCUG 45161 / LMG 19568 / NCTC 13146 / CH001A), this protein is Histidinol-phosphate aminotransferase.